Here is a 212-residue protein sequence, read N- to C-terminus: Inactive ribonuclease-like protein 10 (212 aa).

A signal peptide spans 1-24 (MKLTLVQIFFMMLLLLLGLGVGLG).

This sequence belongs to the pancreatic ribonuclease family. Post-translationally, the N-terminus is blocked. Glycosylated. Male-specific expression in proximal caput of the epididymis.

It is found in the secreted. Its function is as follows. Secreted proximal epididymal protein required for post-testicular sperm maturation and male fertility. May be involved in sperm adhesion to the egg zona pellucida. Does not have ribonuclease activity. This Ovis aries (Sheep) protein is Inactive ribonuclease-like protein 10 (RNASE10).